Here is a 113-residue protein sequence, read N- to C-terminus: MDNINFTPKDILQKEFKPKMRGYDPADVDTFLDSVIKDYENFGKEIERMKNENDRLTDKVDELNKQVSAGGTVEESAPVSGATNVDVLKRLSNLERRVFGAQLEDTDNSSHRI.

Residues 32 to 70 adopt a coiled-coil conformation; the sequence is LDSVIKDYENFGKEIERMKNENDRLTDKVDELNKQVSAG.

It belongs to the GpsB family. Forms polymers through the coiled coil domains. Interacts with PBP1, MreC and EzrA.

The protein localises to the cytoplasm. Divisome component that associates with the complex late in its assembly, after the Z-ring is formed, and is dependent on DivIC and PBP2B for its recruitment to the divisome. Together with EzrA, is a key component of the system that regulates PBP1 localization during cell cycle progression. Its main role could be the removal of PBP1 from the cell pole after pole maturation is completed. Also contributes to the recruitment of PBP1 to the division complex. Not essential for septum formation. In Pediococcus pentosaceus (strain ATCC 25745 / CCUG 21536 / LMG 10740 / 183-1w), this protein is Cell cycle protein GpsB.